The following is a 634-amino-acid chain: Phosphatase and actin regulator 2 (634 aa).

Disordered regions lie at residues 1–32 (MDNA…KRKG), 84–344 (LPDQ…PLED), 412–471 (PQLL…ALAS), and 485–508 (NRPS…ERQE). D2 is lipidated: N-myristoyl glycine. Polar residues predominate over residues 13-26 (IANSDGPTAGSQTP). S16 is subject to Phosphoserine. T25 carries the post-translational modification Phosphothreonine. Residues 60-85 (AVLERKISTRQSREELIRRGVLKELP) form an RPEL 1 repeat. Basic and acidic residues-rich tracts occupy residues 108–120 (ESTR…KSEE) and 137–147 (EDKKENTENHS). Residues 153 to 162 (PALPPSAPPK) show a composition bias toward pro residues. Low complexity-rich tracts occupy residues 231–247 (GSKA…SSRP) and 276–290 (TSHL…GTSD). The segment covering 291–304 (LKGEPAETRVESFK) has biased composition (basic and acidic residues). Residues 324–341 (VPPPPVAPAPSPLAPPLP) show a composition bias toward pro residues. S423 is modified (phosphoserine). Acidic residues predominate over residues 452–464 (TDDEDEDEDEDGS). 3 RPEL repeats span residues 477 to 502 (DTLA…QRTS), 515 to 540 (TKLV…KQKN), and 553 to 578 (RRLS…RFNE). Basic and acidic residues predominate over residues 488–508 (SKKELEDKNILQRTSEEERQE). Phosphoserine occurs at positions 522 and 560.

It belongs to the phosphatase and actin regulator family. Binds PPP1CA and actin.

It localises to the membrane. This is Phosphatase and actin regulator 2 (PHACTR2) from Homo sapiens (Human).